A 354-amino-acid chain; its full sequence is Rhodopsin (354 aa).

Topologically, residues 1-36 (MNGTEGPYFNVPMVNTTGIVRSPYEYPQYYLVSPAA) are extracellular. 2 N-linked (GlcNAc...) asparagine glycosylation sites follow: Asn-2 and Asn-15. The chain crosses the membrane as a helical span at residues 37 to 61 (YAALGAYMFFLILVGFPINFLTLYV). The Cytoplasmic portion of the chain corresponds to 62–73 (TLEHKKLRTPLN). Residues 74-96 (YILLNLAVADLFMVFGGFTTTMY) form a helical membrane-spanning segment. The Extracellular portion of the chain corresponds to 97 to 110 (TSMHGYFVLGRLGC). A disulfide bridge links Cys-110 with Cys-187. A helical transmembrane segment spans residues 111 to 133 (NLEGFFATLGGEIGLWSLVVLAI). The short motif at 134 to 136 (ERW) is the 'Ionic lock' involved in activated form stabilization element. The Cytoplasmic segment spans residues 134–152 (ERWVVVCKPISNFRFGENH). Residues 153–173 (AIMGLVFTWIMAASCAVPPLV) traverse the membrane as a helical segment. Residues 174 to 202 (GWSRYIPEGMQCSCGVDYYTRAEGFNNES) are Extracellular-facing. Residues 203–224 (FVVYMFVCHFLIPLIVVFFCYG) traverse the membrane as a helical segment. Residues 225 to 252 (RLLCAVKEAAAAQQESETTQRAEREVTR) lie on the Cytoplasmic side of the membrane. The chain crosses the membrane as a helical span at residues 253 to 274 (MVVIMVIGFLVCWLPYASVAWY). At 275–286 (IFTNQGSEFGPL) the chain is on the extracellular side. A helical transmembrane segment spans residues 287–308 (FMTIPAFFAKSSSIYNPAIYIC). Position 296 is an N6-(retinylidene)lysine (Lys-296). At 309–354 (MNKQFRNCMITTLCCGKNPFEEEEGASTTASKTEASSVSSSSVSPA) the chain is on the cytoplasmic side. S-palmitoyl cysteine attachment occurs at residues Cys-322 and Cys-323. Residues 332-354 (EGASTTASKTEASSVSSSSVSPA) are disordered. Positions 334–354 (ASTTASKTEASSVSSSSVSPA) are enriched in low complexity.

The protein belongs to the G-protein coupled receptor 1 family. Opsin subfamily. Phosphorylated on some or all of the serine and threonine residues present in the C-terminal region. Post-translationally, contains one covalently linked retinal chromophore.

It localises to the membrane. The protein resides in the cell projection. It is found in the cilium. Its subcellular location is the photoreceptor outer segment. Functionally, photoreceptor required for image-forming vision at low light intensity. While most salt water fish species use retinal as chromophore, most freshwater fish use 3-dehydroretinal, or a mixture of retinal and 3-dehydroretinal. Light-induced isomerization of 11-cis to all-trans retinal triggers a conformational change that activates signaling via G-proteins. Subsequent receptor phosphorylation mediates displacement of the bound G-protein alpha subunit by arrestin and terminates signaling. This Oryzias latipes (Japanese rice fish) protein is Rhodopsin (rho).